The sequence spans 406 residues: Endoglucanase 1 (406 aa).

Positions 1 to 43 are cleaved as a signal peptide; sequence MNSKKIGAMIAAAVLSLIVMTPAATRKIVQRQTRNSSTAVENS. Composition is skewed to polar residues over residues 30 to 41 and 51 to 62; these read QRQTRNSSTAVE and ENVPVSQTHTND. A disordered region spans residues 30–62; sequence QRQTRNSSTAVENSAADESETENVPVSQTHTND. The active-site Proton donor is Glu210. Glu330 serves as the catalytic Nucleophile.

Belongs to the glycosyl hydrolase 5 (cellulase A) family.

It carries out the reaction Endohydrolysis of (1-&gt;4)-beta-D-glucosidic linkages in cellulose, lichenin and cereal beta-D-glucans.. The chain is Endoglucanase 1 (Eg I) from Ruminococcus albus.